Reading from the N-terminus, the 431-residue chain is UDP-N-acetylglucosamine 1-carboxyvinyltransferase (431 aa).

22 to 23 provides a ligand contact to phosphoenolpyruvate; that stretch reads KN. R102 is a UDP-N-acetyl-alpha-D-glucosamine binding site. C126 acts as the Proton donor in catalysis. Position 126 is a 2-(S-cysteinyl)pyruvic acid O-phosphothioketal (C126). UDP-N-acetyl-alpha-D-glucosamine is bound by residues 131–135, D316, and I338; that span reads RPVDL.

Belongs to the EPSP synthase family. MurA subfamily.

It is found in the cytoplasm. It carries out the reaction phosphoenolpyruvate + UDP-N-acetyl-alpha-D-glucosamine = UDP-N-acetyl-3-O-(1-carboxyvinyl)-alpha-D-glucosamine + phosphate. The protein operates within cell wall biogenesis; peptidoglycan biosynthesis. Its function is as follows. Cell wall formation. Adds enolpyruvyl to UDP-N-acetylglucosamine. The sequence is that of UDP-N-acetylglucosamine 1-carboxyvinyltransferase from Beijerinckia indica subsp. indica (strain ATCC 9039 / DSM 1715 / NCIMB 8712).